Consider the following 576-residue polypeptide: Interleukin-1 receptor type 1 (576 aa).

A signal peptide spans 1 to 19; the sequence is MENMKVLLGFICLIVPLLS. 3 consecutive Ig-like C2-type domains span residues 20 to 115, 121 to 217, and 229 to 331; these read LETD…ITMS, PGLC…RVIT, and PVIM…VRLV. Topologically, residues 20 to 338 are extracellular; the sequence is LETDKCTEYP…RLVYPVPDFK (319 aa). Cystine bridges form between C25–C107, C46–C99, and C145–C199. N63 and N103 each carry an N-linked (GlcNAc...) asparagine glycan. N236, N252, and N266 each carry an N-linked (GlcNAc...) asparagine glycan. C251 and C315 are oxidised to a cystine. The helical transmembrane segment at 339–359 threads the bilayer; the sequence is NYLIGGFAIFTATAVFCACIY. Residues 360 to 576 are Cytoplasmic-facing; the sequence is KVFKVDIVLW…LQAETHLPLG (217 aa). The region spanning 386 to 541 is the TIR domain; the sequence is RTYDAYVLYP…RFWKNLRYQM (156 aa). Residue E473 is part of the active site. Y499 is subject to Phosphotyrosine. T556 carries the post-translational modification Phosphothreonine; by PKC.

It belongs to the interleukin-1 receptor family. As to quaternary structure, the interleukin-1 receptor complex is a heterodimer of IL1R1 and IL1RAP. Interacts with PIK3R1. Interacts with IL1A. Post-translationally, a soluble form (sIL1R1) is probably produced by proteolytic cleavage at the cell surface (shedding). In terms of processing, rapidly phosphorylated on Tyr-499 in response to IL-1, which creates a SH2 binding site for the PI 3-kinase regulatory subunit PIK3R1.

Its subcellular location is the membrane. The protein localises to the cell membrane. It localises to the secreted. It carries out the reaction NAD(+) + H2O = ADP-D-ribose + nicotinamide + H(+). In terms of biological role, receptor for IL1A, IL1B and IL1RN. After binding to interleukin-1 associates with the coreceptor IL1RAP to form the high affinity interleukin-1 receptor complex which mediates interleukin-1-dependent activation of NF-kappa-B, MAPK and other pathways. Signaling involves the recruitment of adapter molecules such as TOLLIP, MYD88, and IRAK1 or IRAK2 via the respective TIR domains of the receptor/coreceptor subunits. Binds ligands with comparable affinity and binding of antagonist IL1RN prevents association with IL1RAP to form a signaling complex. Involved in IL1B-mediated costimulation of IFNG production from T-helper 1 (Th1) cells. In Rattus norvegicus (Rat), this protein is Interleukin-1 receptor type 1 (Il1r1).